A 158-amino-acid chain; its full sequence is Large ribosomal subunit protein uL16 (158 aa).

The protein belongs to the universal ribosomal protein uL16 family. Part of the 50S ribosomal subunit.

Its function is as follows. Binds 23S rRNA and is also seen to make contacts with the A and possibly P site tRNAs. The sequence is that of Large ribosomal subunit protein uL16 from Synechococcus sp. (strain CC9902).